The following is a 312-amino-acid chain: Olfactory receptor 2J1 (312 aa).

At 1–26 (MLMKKNASFEDFFLLLGFSNWPHLEV) the chain is on the extracellular side. Asn6 carries N-linked (GlcNAc...) asparagine glycosylation. A helical transmembrane segment spans residues 27-50 (VLFVVILIFYLITLIGNLFIIILS). Residues 51-58 (YLDSHLHT) lie on the Cytoplasmic side of the membrane. A helical membrane pass occupies residues 59–80 (PMYFFLSNLSFLDLCYTTSSIP). The Extracellular segment spans residues 81–101 (QLLVNLWGPEKTISYAGCTVQ). Residues Cys98 and Cys190 are joined by a disulfide bond. A helical transmembrane segment spans residues 102–121 (LYFVLALGTAECVLLVVMSY). The Cytoplasmic portion of the chain corresponds to 122–140 (DRYAAVCRPLHYTVLMHPR). A helical transmembrane segment spans residues 141-159 (FCRLLAAASWVSGFTTSAL). Residues 160–196 (HSSFTFWIPLCRHRLVDHFFCEVPALLRLSCVDTQAN) are Extracellular-facing. Residues 197–220 (ELTLMVMSSIFVLIPLILILTSYG) traverse the membrane as a helical segment. The Cytoplasmic segment spans residues 221–237 (AIARAVLSMQSTTGLQK). The helical transmembrane segment at 238–260 (VLRTCGAHLMVVSLFFIPVMCMY) threads the bilayer. The Extracellular portion of the chain corresponds to 261–273 (LQPPSENSQDQGK). A helical transmembrane segment spans residues 274 to 293 (FIALFYTVVTPSLNPLIYTF). At 294 to 312 (RNKDVRGAVKRLMGWEWGM) the chain is on the cytoplasmic side.

It belongs to the G-protein coupled receptor 1 family.

The protein resides in the cell membrane. Odorant receptor. This is Olfactory receptor 2J1 (OR2J1) from Homo sapiens (Human).